The primary structure comprises 185 residues: Ribosome-recycling factor (185 aa).

The disordered stretch occupies residues Arg-141–Leu-160.

This sequence belongs to the RRF family.

Its subcellular location is the cytoplasm. Its function is as follows. Responsible for the release of ribosomes from messenger RNA at the termination of protein biosynthesis. May increase the efficiency of translation by recycling ribosomes from one round of translation to another. This chain is Ribosome-recycling factor, found in Rhodococcus jostii (strain RHA1).